The sequence spans 327 residues: MKFENFNILATAGYTPERVVPNSELTTMMTTSDEWIVQRTGIHQRHVVTAERTSDLCTRVAQQLLQRSGLQATDIDYIVVATMSPDYQTPAVSAQVQGNIGATKAVALDVNAACSGFVYGLQVVHRLLMGDSPKTALLIGGETLSRLVDWQDRSTAVLFGDGAGGVVLTSALAQDGAFIAADYRTMGEQGRYLTAGANGVDSPFASDPQPVLPFFKMNGRRVYNFAIKQVPASLRRVLDQGHLAVTDVDYFILHQANQRIIERIAEDLTGSMAQFPVNIGQYGNTAAASEPLLLNQLVTSHVIKRGDVLALSGFGGGLTIGTMILRY.

Residues Cys-114 and His-254 contribute to the active site. Positions 255–259 (QANQR) are ACP-binding. Asn-284 is an active-site residue.

The protein belongs to the thiolase-like superfamily. FabH family. In terms of assembly, homodimer.

The protein localises to the cytoplasm. It catalyses the reaction malonyl-[ACP] + acetyl-CoA + H(+) = 3-oxobutanoyl-[ACP] + CO2 + CoA. It functions in the pathway lipid metabolism; fatty acid biosynthesis. Catalyzes the condensation reaction of fatty acid synthesis by the addition to an acyl acceptor of two carbons from malonyl-ACP. Catalyzes the first condensation reaction which initiates fatty acid synthesis and may therefore play a role in governing the total rate of fatty acid production. Possesses both acetoacetyl-ACP synthase and acetyl transacylase activities. Its substrate specificity determines the biosynthesis of branched-chain and/or straight-chain of fatty acids. This chain is Beta-ketoacyl-[acyl-carrier-protein] synthase III, found in Levilactobacillus brevis (strain ATCC 367 / BCRC 12310 / CIP 105137 / JCM 1170 / LMG 11437 / NCIMB 947 / NCTC 947) (Lactobacillus brevis).